The chain runs to 856 residues: Villin-like protein (856 aa).

Gelsolin-like repeat units follow at residues arginine 22–glycine 74, valine 146–alanine 186, leucine 263–lysine 307, leucine 401–glutamate 450, threonine 521–glutamate 561, and leucine 624–alanine 665. The disordered stretch occupies residues serine 762–leucine 796. A compositionally biased stretch (low complexity) spans serine 776–threonine 791. An HP domain is found at alanine 790 to phenylalanine 856.

It belongs to the villin/gelsolin family. In terms of tissue distribution, ubiquitously expressed in 16 tissues examined.

Possible tumor suppressor. This Homo sapiens (Human) protein is Villin-like protein (VILL).